We begin with the raw amino-acid sequence, 307 residues long: GTPase Era (307 aa).

Positions 17-186 (RCGFVAIVGR…LELIKPYLPE (170 aa)) constitute an Era-type G domain. A G1 region spans residues 25–32 (GRPNVGKS). GTP is bound at residue 25–32 (GRPNVGKS). The tract at residues 51–55 (QTTRN) is G2. The tract at residues 72–75 (DTPG) is G3. GTP contacts are provided by residues 72–76 (DTPGF) and 133–136 (NKID). The tract at residues 133–136 (NKID) is G4. The interval 165 to 167 (VSA) is G5. Positions 217–293 (LGEELPYAMN…FLKVWVKVKS (77 aa)) constitute a KH type-2 domain.

Belongs to the TRAFAC class TrmE-Era-EngA-EngB-Septin-like GTPase superfamily. Era GTPase family. As to quaternary structure, monomer.

The protein localises to the cytoplasm. It is found in the cell inner membrane. In terms of biological role, an essential GTPase that binds both GDP and GTP, with rapid nucleotide exchange. Plays a role in 16S rRNA processing and 30S ribosomal subunit biogenesis and possibly also in cell cycle regulation and energy metabolism. In Neisseria meningitidis serogroup A / serotype 4A (strain DSM 15465 / Z2491), this protein is GTPase Era.